A 543-amino-acid polypeptide reads, in one-letter code: Protein phosphatase 1G (543 aa).

Residue Gly-2 is the site of N-myristoyl glycine attachment. Position 22 is an omega-N-methylarginine (Arg-22). The PPM-type phosphatase domain maps to 26–503 (PYGFSAMQGW…DNMTCIIICF (478 aa)). Mn(2+) contacts are provided by Asp-60 and Gly-61. 2 disordered regions span residues 116 to 139 (QIAGRPTEDEDEKEKVADEDDVDN) and 163 to 326 (NCHK…SDSG). Thr-122 is subject to Phosphothreonine. A compositionally biased stretch (acidic residues) spans 123 to 139 (EDEDEKEKVADEDDVDN). Ser-183 carries the phosphoserine modification. The span at 259–310 (DSEDESDEAEEEEEDSEECSEEEDGYSSEEAENEEDEDDTEEAEEDDEEEEM) shows a compositional bias: acidic residues. Residue Lys-381 is modified to N6-acetyllysine. Mn(2+) contacts are provided by Asp-439 and Asp-494. Residues 508-543 (TAAPQPESGKRKLEEVLSTEGAEENGNSDKKKAKRD) form a disordered region. Ser-525 bears the Phosphoserine mark.

This sequence belongs to the PP2C family. In terms of assembly, interacts with NOL3; may dephosphorylate NOL3. Mg(2+) serves as cofactor. The cofactor is Mn(2+).

The protein localises to the cytoplasm. Its subcellular location is the membrane. It catalyses the reaction O-phospho-L-seryl-[protein] + H2O = L-seryl-[protein] + phosphate. The enzyme catalyses O-phospho-L-threonyl-[protein] + H2O = L-threonyl-[protein] + phosphate. In Bos taurus (Bovine), this protein is Protein phosphatase 1G (PPM1G).